A 229-amino-acid chain; its full sequence is Large ribosomal subunit protein uL1 (229 aa).

The protein belongs to the universal ribosomal protein uL1 family. As to quaternary structure, part of the 50S ribosomal subunit.

Functionally, binds directly to 23S rRNA. The L1 stalk is quite mobile in the ribosome, and is involved in E site tRNA release. Its function is as follows. Protein L1 is also a translational repressor protein, it controls the translation of the L11 operon by binding to its mRNA. The protein is Large ribosomal subunit protein uL1 of Actinobacillus pleuropneumoniae serotype 3 (strain JL03).